A 751-amino-acid chain; its full sequence is Collagen alpha-1(XIII) chain (751 aa).

Positions 1 to 24 are disordered; the sequence is MVAERTRKAAASGSRGPGELGAPG. Residues 1 to 40 lie on the Cytoplasmic side of the membrane; that stretch reads MVAERTRKAAASGSRGPGELGAPGPGTVALAEQCARLPSP. A nonhelical region 1 (NC1) region spans residues 1–119; sequence MVAERTRKAA…KMSPGCNCPP (119 aa). Gly residues predominate over residues 15–24; it reads RGPGELGAPG. A helical; Signal-anchor for type II membrane protein transmembrane segment spans residues 41–59; the sequence is GCCGLLALALCSLALSLLA. Topologically, residues 60-751 are extracellular; it reads HFRTAELQAR…GLPVQGCWNK (692 aa). Disordered regions lie at residues 108 to 127, 190 to 225, and 265 to 449; these read APKM…PTGR, PGHP…EYPH, and TFQG…EMVD. The span at 116–125 shows a compositional bias: pro residues; sequence NCPPGPPGPT. A triple-helical region 1 (COL1) region spans residues 120–223; the sequence is GPPGPTGRPG…KGEKGQCGEY (104 aa). Over residues 204–213 the composition is skewed to low complexity; that stretch reads PRGQPGPQGQ. The segment covering 214–225 has biased composition (basic and acidic residues); sequence KGEKGQCGEYPH. A nonhelical region 2 (NC2) region spans residues 224–273; that stretch reads PHREYPGGMLAALRSNPIMSLKLLPLLNSVRLAPPPVIKRRTFQGEQSQT. The triple-helical region 2 (COL2) stretch occupies residues 274–445; that stretch reads GIQGPPGPPG…KGAKGEPGKG (172 aa). Pro residues-rich tracts occupy residues 278–288, 296–312, and 391–402; these read PPGPPGPPGPS, LPGP…PGPK, and PGPPGLPGPPGP. A compositionally biased stretch (low complexity) spans 403-436; it reads KGEAGVDGQAGPPGQQGDKGQPGAAGEQGPSGPK. Positions 438 to 447 are enriched in basic and acidic residues; it reads AKGEPGKGEM. The segment at 446-467 is nonhelical region 3 (NC3); sequence EMVDYNGSINEALQEIRTLALM. N-linked (GlcNAc...) asparagine glycosylation is present at Asn451. Residues 466–751 are disordered; the sequence is LMGPPGLPGQ…GLPVQGCWNK (286 aa). The tract at residues 468–733 is triple-helical region 3 (COL3); the sequence is GPPGLPGQTG…KGDQGAPGLD (266 aa). Positions 470–484 are enriched in pro residues; it reads PGLPGQTGPPGPPGT. Composition is skewed to basic and acidic residues over residues 499–509, 557–568, and 586–596; these read HDGDKGPRGKP, TGEKGEPGDEGR, and EKGEAGEKGDP. Positions 601 to 613 are enriched in pro residues; that stretch reads PGPPGPEGPPGPP. The segment covering 615–628 has biased composition (low complexity); sequence LQGFPGPKGEAGLE. The segment covering 630-643 has biased composition (basic and acidic residues); it reads SKGEKGSQGEKGDR. Pro residues predominate over residues 658–673; it reads PGPPGTPGPIGVPGPA. Residues 684 to 699 show a composition bias toward low complexity; it reads DPGMTGPTGAAGLPGL. A compositionally biased stretch (basic and acidic residues) spans 706–726; that stretch reads KGNRGERGKKGSRGPKGDKGD. The nonhelical region 4 (NC4) stretch occupies residues 734–751; that stretch reads APCPLGEDGLPVQGCWNK.

As to quaternary structure, homotrimer; disulfide-linked. Nucleation of the type XIII collagen triple helix is likely to occur at the N-terminal region with triple helix formation proceeding from the N- to the C-terminus. Interacts with FN1, perlecan/HSPG2 and NID2.

It is found in the cell membrane. The protein resides in the postsynaptic cell membrane. Involved in cell-matrix and cell-cell adhesion interactions that are required for normal development. May participate in the linkage between muscle fiber and basement membrane. May play a role in endochondral ossification of bone and branching morphogenesis of lung. Binds heparin. At neuromuscular junctions, may play a role in acetylcholine receptor clustering. This chain is Collagen alpha-1(XIII) chain, found in Mus musculus (Mouse).